The sequence spans 167 residues: Phosphorelay intermediate protein YPD1 (167 aa).

Positions 24–129 constitute an HPt domain; the sequence is DSDFSKGLII…DDEEIKIQVD (106 aa). Phosphohistidine is present on His-64.

This sequence belongs to the YPD1 family. In terms of assembly, interacts with the response regulatory domains of SLN1 and SSK1. Post-translationally, the phosphorelay mechanism involves the sequential transfer of a phosphate group from 'His-576' (H1) to 'Asp-1144' (D1) of SLN1, then to His-64 (H2) of YPD1 and finally to 'Asp-554' (D2) of SSK1 or 'Asp-427' (D2) of SKN7.

It localises to the cytoplasm. The protein resides in the nucleus. Phosphorelay intermediate protein that is part of the branched SLN1-YPD1-SKN7/SSK1 two-component regulatory system, which controls activity of the HOG1 pathway and gene expression in response to changes in the osmolarity of the extracellular environment. Catalyzes the phosphoryl group transfer from the membrane-bound osmosensing histidine kinase SLN1 to two distinct response regulator proteins, SSK1 in the cytoplasm, and transcription factor SKN7 in the nucleus. In Saccharomyces cerevisiae (strain ATCC 204508 / S288c) (Baker's yeast), this protein is Phosphorelay intermediate protein YPD1 (YPD1).